A 424-amino-acid chain; its full sequence is Probable methyltransferase EP424R (424 aa).

The region spanning 103–315 (QIVTNAWLKM…TYIVGKNRLR (213 aa)) is the Adrift-type SAM-dependent 2'-O-MTase domain. S-adenosyl-L-methionine-binding residues include G135 and D228. Catalysis depends on K268, which acts as the Proton acceptor.

The protein localises to the virion. The chain is Probable methyltransferase EP424R from Ornithodoros (relapsing fever ticks).